A 1415-amino-acid chain; its full sequence is MKNYKYQNTLIGKKQLRQLLAWSFTNYDSMQACALADELKYLGFKYASQAGISISIEDLKIPFVKNLMLEKANQEIINAEKIYLKGKITDVERFQKIIDTWSLTSESLKEQVIYYFKNYDPLNSVYIMAFSGARGNLSQVRQLVGMRGLMSDPSGEIMNLPIKKNFREGLTITDYLMSGYGARKGIVDTALKTANSGYLTRRLIDVGQDVLIREKDCLTNHSFLFSVSNEELKSLNLIYQKILGRVLSKPIHDPKTNRILVPAGTQITPKLIEKFKEYNVKKFYIRSPLTCNLYRAICQNCYGWDLANENLVDIGEAIGILAGQSIGEPGTQLTMRTFHTGGIFTSEARQQITTPINGVIRFYKTLKTVLLRTNRGEDVLITKNSGSVILIPDDEDQDLVQIEILRNTILFPKNNQYIVKDTVIGELLNTNRQIKTEVKPILSDTCGEIFMPVLKKKINLLNNNKLLWILSGQLYNGPINSFVNFYSDYKLNCRSYIFRTKIINHYSGSVEFINTKSNLYQRLIRIKNNKYAFFNSKLEKLRYSIQHKNYLLNLQGDKYLVKIQKKDLRLYLQATRNYQVATLITNRFKTLVGGTVYYDHQNVYKNYKPNSTINYLSRVNFLNNYKPVVSHKTIIWLGEEVYKVNCELNILLAEHGDFISEGFELIPGLFSKTSGVVVIKQKNNLIHTISIKSGLVYEGKKFKMTSKKVYYPGEIIFSHIPITKISFCEHITGKNIEQLLVRPIEIYEFPYLNNISAKIQNTHNKDSNIRLSSKIIYSYKPNQLIKGTRNLNLISTILTLKSKETVTKNLNLELSHNQKTKLIDLKISEKFNLNHYISPNLRYKNLQSCLLIQPNQFIDRYTNLGYLESKTSNSLEIVKIKLKIKDSKQILLISNQDCLTVKKEKFIGKKLNDFIINSSNVNETGKIIIENENNLTLQKGKPYFFPNCKDDNVINKTNLQYKTISPTRVSPRLEKNINYKISLNYYDMMKLSVNKDCTLSEKNEDPIKIKSEFSKLFLKKNGKLYSSLIPQFFKKFSLHTSEFSPKYKQIIQPNGLAKRTIGKMDRTLLMQSSEITKNDYKNLKNSNYQLALLKFVEYPFTKSTKSIGLYSITEDYFEQDVNSVFCKNSEFIEEGETLGLLNLEKEITGDIVQGLPRIEEILEARKKNSNIKRIPTSQKKGLLVQKSSLDTNFEFRKLGTNIKENEKVNPHKLLKVYFNYYGWIKPFICDQKEEIKYARLIKNYEGSYKSFKKVQSFILDSVQAVYQSQGVIINDKHLEVIIKQMTTKVLITYEGNTPLLRREVIDLYHIQYINQIIQSQGKQSACYVPLLLGITKAALNNPSFISAASFQETTRVLTKAAIEGRIDWLRGLKENIIIGHLIPAGTGSQNYRNCFKKESLVRSKLPKSFDTILTR.

Zn(2+) is bound by residues Cys217, Cys291, Cys298, and Cys301.

It belongs to the RNA polymerase beta' chain family. RpoC2 subfamily. As to quaternary structure, in plastids the minimal PEP RNA polymerase catalytic core is composed of four subunits: alpha, beta, beta', and beta''. When a (nuclear-encoded) sigma factor is associated with the core the holoenzyme is formed, which can initiate transcription. Zn(2+) is required as a cofactor.

The protein resides in the plastid. The protein localises to the chloroplast. The catalysed reaction is RNA(n) + a ribonucleoside 5'-triphosphate = RNA(n+1) + diphosphate. In terms of biological role, DNA-dependent RNA polymerase catalyzes the transcription of DNA into RNA using the four ribonucleoside triphosphates as substrates. The protein is DNA-directed RNA polymerase subunit beta'' of Phaeodactylum tricornutum (strain CCAP 1055/1).